The sequence spans 761 residues: Xaa-Pro dipeptidyl-peptidase (761 aa).

Catalysis depends on charge relay system residues S347, D467, and H497.

The protein belongs to the peptidase S15 family. Homodimer.

The protein resides in the cytoplasm. It carries out the reaction Hydrolyzes Xaa-Pro-|- bonds to release unblocked, N-terminal dipeptides from substrates including Ala-Pro-|-p-nitroanilide and (sequentially) Tyr-Pro-|-Phe-Pro-|-Gly-Pro-|-Ile.. Functionally, removes N-terminal dipeptides sequentially from polypeptides having unsubstituted N-termini provided that the penultimate residue is proline. The polypeptide is Xaa-Pro dipeptidyl-peptidase (Streptococcus agalactiae serotype Ia (strain ATCC 27591 / A909 / CDC SS700)).